A 227-amino-acid polypeptide reads, in one-letter code: Urease accessory protein UreF (227 aa).

The protein belongs to the UreF family. In terms of assembly, ureD, UreF and UreG form a complex that acts as a GTP-hydrolysis-dependent molecular chaperone, activating the urease apoprotein by helping to assemble the nickel containing metallocenter of UreC. The UreE protein probably delivers the nickel.

It localises to the cytoplasm. Its function is as follows. Required for maturation of urease via the functional incorporation of the urease nickel metallocenter. In Bacillus sp. (strain TB-90), this protein is Urease accessory protein UreF.